A 339-amino-acid polypeptide reads, in one-letter code: DNA-directed RNA polymerase subunit alpha (339 aa).

The alpha N-terminal domain (alpha-NTD) stretch occupies residues 1 to 235 (MTIQKNWQEL…DQLNVFVNFE (235 aa)). The tract at residues 251–339 (FNPAFLKKVD…ELAKRFEDHY (89 aa)) is alpha C-terminal domain (alpha-CTD).

It belongs to the RNA polymerase alpha chain family. As to quaternary structure, homodimer. The RNAP catalytic core consists of 2 alpha, 1 beta, 1 beta' and 1 omega subunit. When a sigma factor is associated with the core the holoenzyme is formed, which can initiate transcription.

The enzyme catalyses RNA(n) + a ribonucleoside 5'-triphosphate = RNA(n+1) + diphosphate. Functionally, DNA-dependent RNA polymerase catalyzes the transcription of DNA into RNA using the four ribonucleoside triphosphates as substrates. In Rhodopseudomonas palustris (strain BisB5), this protein is DNA-directed RNA polymerase subunit alpha.